The chain runs to 255 residues: MADNDFEGFGIFEEPEGFRPSTPPPKEVLHTRVIVPNGPEEIKLRLVGSHSLWAHYLWNSGIELANYIDKNPDTVRAKKVLELGAGAGLPSIVSAFDGAKFVVSTDYPDPALIDNLEHNVKQYAEIASKISAVGYLWGSNIKEVMSNAGFKDNEVFDILLLSDLVFNHTEHSKLIKSCKMAIEGNPNAVVYVFFTHHRPHLAKKDMIFFDIAQSEGFQIEKILEEKRTPMFEEDPGAPEIRATVHGYKMTIPIPV.

Positions 1–25 are disordered; that stretch reads MADNDFEGFGIFEEPEGFRPSTPPP. S-adenosyl-L-methionine-binding positions include W58, 84-86, D106, W137, and S162; that span reads GAG.

The protein belongs to the class I-like SAM-binding methyltransferase superfamily. EFM7 family.

It is found in the cytoplasm. S-adenosyl-L-methionine-dependent protein methyltransferase that trimethylates the N-terminal glycine 'Gly-2' of elongation factor 1-alpha, before also catalyzing the mono- and dimethylation of 'Lys-3'. This chain is Protein N-terminal and lysine N-methyltransferase efm7, found in Schizosaccharomyces pombe (strain 972 / ATCC 24843) (Fission yeast).